Reading from the N-terminus, the 313-residue chain is Cytosolic Fe-S cluster assembly factor NUBP1 homolog (313 aa).

Residues 1–25 (MSDVPEDANAGCPGTGSAGAGKASG) form a disordered region. C12, C26, C29, and C35 together coordinate [4Fe-4S] cluster. Residue 66–73 (GKGGVGKS) coordinates ATP. 2 residues coordinate [4Fe-4S] cluster: C240 and C243.

The protein belongs to the Mrp/NBP35 ATP-binding proteins family. NUBP1/NBP35 subfamily. Heterotetramer of 2 NUBP1 and 2 NUBP2 chains. The cofactor is [4Fe-4S] cluster.

The protein resides in the cytoplasm. It localises to the cell projection. In terms of biological role, component of the cytosolic iron-sulfur (Fe/S) protein assembly (CIA) machinery. Required for maturation of extramitochondrial Fe-S proteins. The NUBP1-NUBP2 heterotetramer forms a Fe-S scaffold complex, mediating the de novo assembly of an Fe-S cluster and its transfer to target apoproteins. Regulates cilium formation and structure. The protein is Cytosolic Fe-S cluster assembly factor NUBP1 homolog of Caenorhabditis briggsae.